We begin with the raw amino-acid sequence, 506 residues long: Maturase K (506 aa).

Belongs to the intron maturase 2 family. MatK subfamily.

The protein localises to the plastid. It is found in the chloroplast. Functionally, usually encoded in the trnK tRNA gene intron. Probably assists in splicing its own and other chloroplast group II introns. The chain is Maturase K from Rhododendron ferrugineum (Alpenrose).